We begin with the raw amino-acid sequence, 256 residues long: Low molecular mass lipoprotein 3 (256 aa).

A signal peptide spans 1–17 (MKPAIVILCLFVASLYA).

It belongs to the 30 kDa lipoprotein family. Detected in larval hemolymph (at protein level).

The protein resides in the secreted. The chain is Low molecular mass lipoprotein 3 from Bombyx mori (Silk moth).